Reading from the N-terminus, the 613-residue chain is WD40 repeat-containing protein HOS15 (613 aa).

The LisH domain occupies 5–37; sequence TSVELNFLVFRYLQESGFTHAAFTLGYEAGINK. 2 disordered regions span residues 101 to 174 and 193 to 214; these read KKRK…REKM and EIER…KQLG. WD repeat units follow at residues 263–302, 322–362, 363–402, 405–443, 446–485, 488–536, 539–580, and 582–613; these read GHTS…FKAV, EKSK…STLS, KHKG…WKQQ, FHSG…PAKT, GHQG…FVHD, EHTK…MLCS, GHRE…KTYT, and NGGI…DFRM.

The protein localises to the nucleus. Functionally, acts as a repressor of cold stress-regulated gene expression. Interacts specifically with and promotes deacetylation of histone H4. Plays a role in gene regulation for plant acclimation and tolerance to cold stress. In Arabidopsis thaliana (Mouse-ear cress), this protein is WD40 repeat-containing protein HOS15.